Here is a 427-residue protein sequence, read N- to C-terminus: Serine protease HTRA2, mitochondrial (427 aa).

A disordered region spans residues H33–S57. Residues V67–G87 traverse the membrane as a helical segment. The IAP-binding motif lies at A78–S81. Positions S144–L307 are serine protease. Active-site charge relay system residues include H162, D194, and S271. A PDZ domain is found at M330 to V415.

Belongs to the peptidase S1C family. In terms of assembly, interacts with th/DIAP1 (via BIR 2 domain).

Its subcellular location is the mitochondrion intermembrane space. It localises to the mitochondrion membrane. It carries out the reaction Cleavage of non-polar aliphatic amino-acids at the P1 position, with a preference for Val, Ile and Met. At the P2 and P3 positions, Arg is selected most strongly with a secondary preference for other hydrophilic residues.. Functionally, serine protease that shows proteolytic activity against a non-specific substrate beta-casein. Promotes or induces cell death either by direct binding to and inhibition of BIRC proteins (also called inhibitor of apoptosis proteins, IAPs), leading to an increase in caspase activity, or by a BIRC inhibition-independent, caspase-independent and serine protease activity-dependent mechanism. Can antagonize antiapoptotic activity of th/Diap1 by directly inducing the degradation of th/Diap1. The protein is Serine protease HTRA2, mitochondrial of Drosophila persimilis (Fruit fly).